The primary structure comprises 147 residues: Large ribosomal subunit protein uL15 (147 aa).

Residues 1-11 are compositionally biased toward basic and acidic residues; it reads MKLHDLRPAKD. A disordered region spans residues 1-57; the sequence is MKLHDLRPAKDAKKKRKRVGRGTGSGRGFTSGRGSKGQNARSGGGVRPTFEGGQTPL. The span at 21–35 shows a compositional bias: gly residues; it reads RGTGSGRGFTSGRGS.

It belongs to the universal ribosomal protein uL15 family. In terms of assembly, part of the 50S ribosomal subunit.

Binds to the 23S rRNA. This chain is Large ribosomal subunit protein uL15, found in Halothermothrix orenii (strain H 168 / OCM 544 / DSM 9562).